A 584-amino-acid chain; its full sequence is Aspartate--tRNA ligase (584 aa).

Residue Glu169 participates in L-aspartate binding. Positions 193 to 196 (QLFK) are aspartate. Position 215 (Arg215) interacts with L-aspartate. Residues 215–217 (RDE) and Gln224 each bind ATP. His446 provides a ligand contact to L-aspartate. Position 480 (Glu480) interacts with ATP. Arg487 is an L-aspartate binding site. An ATP-binding site is contributed by 532–535 (GLDR).

It belongs to the class-II aminoacyl-tRNA synthetase family. Type 1 subfamily. As to quaternary structure, homodimer.

It localises to the cytoplasm. It catalyses the reaction tRNA(Asp) + L-aspartate + ATP = L-aspartyl-tRNA(Asp) + AMP + diphosphate. Its function is as follows. Catalyzes the attachment of L-aspartate to tRNA(Asp) in a two-step reaction: L-aspartate is first activated by ATP to form Asp-AMP and then transferred to the acceptor end of tRNA(Asp). The sequence is that of Aspartate--tRNA ligase from Buchnera aphidicola subsp. Schizaphis graminum (strain Sg).